We begin with the raw amino-acid sequence, 733 residues long: Leucine-rich repeat neuronal protein 4 (733 aa).

A signal peptide spans 1–19 (MRWTLMLQLLQLLLQLLMA). Over 20–676 (QSQSLERISQ…CATFTTKPSS (657 aa)) the chain is Extracellular. 10 LRR repeats span residues 62–82 (GVTT…CLPR), 83–106 (TLRS…GRLP), 107–128 (ELRV…RDTL), 130–151 (ELRE…AGPS), 154–175 (SLRS…TFAC), 178–199 (ALRL…AFAG), 207–230 (ALEL…RNLP), 231–253 (KLKS…IFKM), 256–278 (NLRQ…IFQD), and 281–302 (NLQV…NSSQ). Asparagine 70 carries N-linked (GlcNAc...) asparagine glycosylation. N-linked (GlcNAc...) asparagine glycosylation occurs at asparagine 183. Residues asparagine 291, asparagine 299, asparagine 327, asparagine 408, and asparagine 469 are each glycosylated (N-linked (GlcNAc...) asparagine). The LRRCT domain maps to 311–364 (NPLICSCELAWLLVDVNKTVLHRAADTMCEPALGSTGPFSGPLSLSHLSNVCRS). The interval 395–423 (STALSAQPGGSQQNITKVPSLTMTSPTQG) is disordered. Residues 480 to 518 (KYLEPLPTSPNPRSLPQTKQRTQATPRALHTDPPQDEIP) form a disordered region. The span at 490–504 (NPRSLPQTKQRTQAT) shows a compositional bias: polar residues. In terms of domain architecture, Fibronectin type-III spans 576–675 (TPDPPTLQGV…SCATFTTKPS (100 aa)). Asparagine 619 is a glycosylation site (N-linked (GlcNAc...) asparagine). The chain crosses the membrane as a helical span at residues 677 to 697 (VVIFWGLCTASGLLLVSTLVL). Residues 698–733 (SVCLWRQRWKPHRQFYDTHLVAFKNPARAEEVTQWE) lie on the Cytoplasmic side of the membrane.

It localises to the membrane. In terms of biological role, may play an important role in hippocampus-dependent long-lasting memory. The polypeptide is Leucine-rich repeat neuronal protein 4 (Lrrn4) (Mus musculus (Mouse)).